The following is a 165-amino-acid chain: Transcription factor E (165 aa).

The HTH TFE/IIEalpha-type domain occupies 5 to 87 (NDPVVRGYLL…LWQLDLSDIE (83 aa)).

The protein belongs to the TFE family. In terms of assembly, monomer. Interaction with RNA polymerase subunits RpoF and RpoE is necessary for Tfe stimulatory transcription activity. Able to interact with Tbp and RNA polymerase in the absence of DNA promoter. Interacts both with the preinitiation and elongation complexes.

In terms of biological role, transcription factor that plays a role in the activation of archaeal genes transcribed by RNA polymerase. Facilitates transcription initiation by enhancing TATA-box recognition by TATA-box-binding protein (Tbp), and transcription factor B (Tfb) and RNA polymerase recruitment. Not absolutely required for transcription in vitro, but particularly important in cases where Tbp or Tfb function is not optimal. It dynamically alters the nucleic acid-binding properties of RNA polymerases by stabilizing the initiation complex and destabilizing elongation complexes. Seems to translocate with the RNA polymerase following initiation and acts by binding to the non template strand of the transcription bubble in elongation complexes. In Methanococcoides burtonii (strain DSM 6242 / NBRC 107633 / OCM 468 / ACE-M), this protein is Transcription factor E.